The sequence spans 93 residues: Putative membrane protein insertion efficiency factor (93 aa).

Belongs to the UPF0161 family.

The protein resides in the cell inner membrane. In terms of biological role, could be involved in insertion of integral membrane proteins into the membrane. The protein is Putative membrane protein insertion efficiency factor of Cupriavidus taiwanensis (strain DSM 17343 / BCRC 17206 / CCUG 44338 / CIP 107171 / LMG 19424 / R1) (Ralstonia taiwanensis (strain LMG 19424)).